The chain runs to 145 residues: U1 small nuclear ribonucleoprotein C (145 aa).

The Matrin-type zinc-finger motif lies at 4 to 36; sequence YYCDYCDTYLTHDSPSVRKTHCTGRKHRDNVKF. The disordered stretch occupies residues 67–91; sequence FAGGPGGAPPKPAGVSIPPPNMGAP. Positions 73-91 are enriched in pro residues; that stretch reads GAPPKPAGVSIPPPNMGAP.

This sequence belongs to the U1 small nuclear ribonucleoprotein C family. As to quaternary structure, U1 snRNP is composed of the 7 core Sm proteins B/B', D1, D2, D3, E, F and G that assemble in a heptameric protein ring on the Sm site of the small nuclear RNA to form the core snRNP, and at least 3 U1 snRNP-specific proteins U1-70K, U1-A and U1-C. U1-C interacts with U1 snRNA and the 5' splice-site region of the pre-mRNA.

It is found in the nucleus. Component of the spliceosomal U1 snRNP, which is essential for recognition of the pre-mRNA 5' splice-site and the subsequent assembly of the spliceosome. U1-C is directly involved in initial 5' splice-site recognition for both constitutive and regulated alternative splicing. The interaction with the 5' splice-site seems to precede base-pairing between the pre-mRNA and the U1 snRNA. Stimulates commitment or early (E) complex formation by stabilizing the base pairing of the 5' end of the U1 snRNA and the 5' splice-site region. Regulates alternative splicing of a distinct group of target genes. This chain is U1 small nuclear ribonucleoprotein C, found in Drosophila melanogaster (Fruit fly).